The sequence spans 437 residues: Isthmin-2 (437 aa).

The N-terminal stretch at 1–25 is a signal peptide; the sequence is MLRARKGLWVLLSVLLAFWIERAIS. A disordered region spans residues 156–191; it reads DSGEDGTGQAEDEEDDYDYDSGEPIPSGLGKTDGDW. A compositionally biased stretch (acidic residues) spans 165 to 176; the sequence is AEDEEDDYDYDS. In terms of domain architecture, TSP type-1 spans 197–242; sequence EEKEEEWSTWSPCSVTCGHGNQTRSRSCGDFCTSTESQSCDLVPCP. 3 cysteine pairs are disulfide-bonded: C209–C236, C213–C241, and C224–C228. N-linked (GlcNAc...) asparagine glycosylation occurs at N217. N258 and N349 each carry an N-linked (GlcNAc...) asparagine glycan. The 164-residue stretch at 262-425 folds into the AMOP domain; that stretch reads PYGTDVGSCE…LHCMENPQQD (164 aa).

Belongs to the isthmin family.

The protein localises to the secreted. This Danio rerio (Zebrafish) protein is Isthmin-2 (ism2).